The sequence spans 171 residues: Large ribosomal subunit protein uL24 (171 aa).

Positions 1–124 (MNIKTGDTVV…AKPAKTKAEK (124 aa)) are large ribosomal subunit protein uL24. The tract at residues 108-171 (GQTLDKAAKP…SVQKKGASGK (64 aa)) is disordered. Positions 125–171 (VEKAATSSTDKPAKVTKAAKEAKPVKAVKSQKVEKNTSVQKKGASGK) are unknown.

It belongs to the universal ribosomal protein uL24 family. As to quaternary structure, part of the 50S ribosomal subunit.

Its function is as follows. One of two assembly initiator proteins, it binds directly to the 5'-end of the 23S rRNA, where it nucleates assembly of the 50S subunit. Functionally, one of the proteins that surrounds the polypeptide exit tunnel on the outside of the subunit. This chain is Large ribosomal subunit protein uL24, found in Acholeplasma laidlawii (strain PG-8A).